The sequence spans 418 residues: Multidrug resistance protein MdtG (418 aa).

The next 11 helical transmembrane spans lie at 19 to 39, 56 to 76, 90 to 110, 113 to 133, 144 to 164, 171 to 191, 222 to 242, 251 to 271, 288 to 308, 317 to 337, and 376 to 396; these read IGCF…PLYV, LVFS…GGLA, LGMA…QFLI, ALLG…ATQI, TLST…GVLA, PVFF…LLFI, LFVT…ILTL, VANI…AALI, ILIA…FVQT, FLLG…LVYN, and AVFL…GLSL.

This sequence belongs to the major facilitator superfamily. DHA1 family. MdtG (TC 2.A.1.2.20) subfamily.

Its subcellular location is the cell inner membrane. This is Multidrug resistance protein MdtG from Enterobacter lignolyticus (strain SCF1).